The primary structure comprises 254 residues: Pyridoxine 5'-phosphate synthase (254 aa).

Asn12 is a binding site for 3-amino-2-oxopropyl phosphate. A 1-deoxy-D-xylulose 5-phosphate-binding site is contributed by 14 to 15; the sequence is DH. 3-amino-2-oxopropyl phosphate is bound at residue Arg23. His48 functions as the Proton acceptor in the catalytic mechanism. 1-deoxy-D-xylulose 5-phosphate contacts are provided by Arg50 and His55. Glu75 functions as the Proton acceptor in the catalytic mechanism. Thr105 provides a ligand contact to 1-deoxy-D-xylulose 5-phosphate. Residue His199 is the Proton donor of the active site. 3-amino-2-oxopropyl phosphate contacts are provided by residues Gly200 and 221–222; that span reads GF.

It belongs to the PNP synthase family. In terms of assembly, homooctamer; tetramer of dimers.

Its subcellular location is the cytoplasm. It carries out the reaction 3-amino-2-oxopropyl phosphate + 1-deoxy-D-xylulose 5-phosphate = pyridoxine 5'-phosphate + phosphate + 2 H2O + H(+). It participates in cofactor biosynthesis; pyridoxine 5'-phosphate biosynthesis; pyridoxine 5'-phosphate from D-erythrose 4-phosphate: step 5/5. In terms of biological role, catalyzes the complicated ring closure reaction between the two acyclic compounds 1-deoxy-D-xylulose-5-phosphate (DXP) and 3-amino-2-oxopropyl phosphate (1-amino-acetone-3-phosphate or AAP) to form pyridoxine 5'-phosphate (PNP) and inorganic phosphate. The chain is Pyridoxine 5'-phosphate synthase from Rhodopseudomonas palustris (strain ATCC BAA-98 / CGA009).